Reading from the N-terminus, the 403-residue chain is Tubby-like F-box protein 6 (403 aa).

The region spanning 50–105 is the F-box domain; that stretch reads SCWAQLPPELLREVLVRIEESEVWWPSRRDVVACAGVCRSWRGITKEIVRVPEASG.

This sequence belongs to the TUB family. In terms of tissue distribution, ubiquitous.

This Oryza sativa subsp. japonica (Rice) protein is Tubby-like F-box protein 6 (TULP6).